A 104-amino-acid polypeptide reads, in one-letter code: uncharacterized protein (104 aa).

The protein to M.jannaschii MJ1511.

This is an uncharacterized protein from Methanocaldococcus jannaschii (strain ATCC 43067 / DSM 2661 / JAL-1 / JCM 10045 / NBRC 100440) (Methanococcus jannaschii).